The following is a 698-amino-acid chain: Na(+)/H(+) antiporter NhaS5 (698 aa).

Helical transmembrane passes span Ser-10 to Phe-30, Leu-35 to Val-55, Leu-65 to Val-85, Leu-100 to Phe-120, Asn-121 to Val-141, Ile-156 to Ile-176, Ala-184 to Phe-204, Gln-222 to Val-242, Leu-275 to Val-295, Leu-300 to Ile-320, Gly-333 to Ala-353, and Val-370 to Ala-390.

The protein belongs to the monovalent cation:proton antiporter 2 (CPA2) transporter (TC 2.A.37) family.

It is found in the membrane. Its function is as follows. Na(+)/H(+) antiporter. This chain is Na(+)/H(+) antiporter NhaS5 (nhaS5), found in Synechocystis sp. (strain ATCC 27184 / PCC 6803 / Kazusa).